We begin with the raw amino-acid sequence, 350 residues long: Holliday junction branch migration complex subunit RuvB (350 aa).

Residues 1–182 (MEDRIVTPLN…FGVLCPMDFY (182 aa)) form a large ATPase domain (RuvB-L) region. ATP contacts are provided by residues L21, R22, G63, K66, T67, T68, 129–131 (EDY), R172, Y182, and R219. T67 contributes to the Mg(2+) binding site. Residues 183–253 (DQEELSEIVV…TSKAALELLE (71 aa)) form a small ATPAse domain (RuvB-S) region. The interval 256 to 350 (KEGFDSIDNK…KQSSLFDGEV (95 aa)) is head domain (RuvB-H). The DNA site is built by R311 and R316.

It belongs to the RuvB family. Homohexamer. Forms an RuvA(8)-RuvB(12)-Holliday junction (HJ) complex. HJ DNA is sandwiched between 2 RuvA tetramers; dsDNA enters through RuvA and exits via RuvB. An RuvB hexamer assembles on each DNA strand where it exits the tetramer. Each RuvB hexamer is contacted by two RuvA subunits (via domain III) on 2 adjacent RuvB subunits; this complex drives branch migration. In the full resolvosome a probable DNA-RuvA(4)-RuvB(12)-RuvC(2) complex forms which resolves the HJ.

The protein localises to the cytoplasm. It catalyses the reaction ATP + H2O = ADP + phosphate + H(+). Functionally, the RuvA-RuvB-RuvC complex processes Holliday junction (HJ) DNA during genetic recombination and DNA repair, while the RuvA-RuvB complex plays an important role in the rescue of blocked DNA replication forks via replication fork reversal (RFR). RuvA specifically binds to HJ cruciform DNA, conferring on it an open structure. The RuvB hexamer acts as an ATP-dependent pump, pulling dsDNA into and through the RuvAB complex. RuvB forms 2 homohexamers on either side of HJ DNA bound by 1 or 2 RuvA tetramers; 4 subunits per hexamer contact DNA at a time. Coordinated motions by a converter formed by DNA-disengaged RuvB subunits stimulates ATP hydrolysis and nucleotide exchange. Immobilization of the converter enables RuvB to convert the ATP-contained energy into a lever motion, pulling 2 nucleotides of DNA out of the RuvA tetramer per ATP hydrolyzed, thus driving DNA branch migration. The RuvB motors rotate together with the DNA substrate, which together with the progressing nucleotide cycle form the mechanistic basis for DNA recombination by continuous HJ branch migration. Branch migration allows RuvC to scan DNA until it finds its consensus sequence, where it cleaves and resolves cruciform DNA. The sequence is that of Holliday junction branch migration complex subunit RuvB from Clostridium kluyveri (strain NBRC 12016).